The sequence spans 36 residues: Dolichyl-diphosphooligosaccharide--protein glycosyltransferase subunit OST4 (36 aa).

Residues 1–9 (MISDEQLNS) are Lumenal-facing. A helical membrane pass occupies residues 10 to 28 (LAITFGIVMMTLIVIYHAV). The Cytoplasmic portion of the chain corresponds to 29–36 (DSTMSPKN).

The protein belongs to the OST4 family. In terms of assembly, component of the oligosaccharyltransferase (OST) complex, which appears to exist in two assemblies comprising OST1, OST2, OST4, OST5, STT3, SWP1, WPB1, and either OST3 or OST6. OST assembly occurs through the formation of 3 subcomplexes. Subcomplex 1 contains OST1 and OST5, subcomplex 2 contains STT3, OST3, and OST4, and subcomplex 3 contains OST2, WBP1, and SWP1. Interacts with SEC61, SBH1 and SSS1.

The protein localises to the endoplasmic reticulum membrane. It participates in protein modification; protein glycosylation. Its function is as follows. Subunit of the oligosaccharyl transferase (OST) complex that catalyzes the initial transfer of a defined glycan (Glc(3)Man(9)GlcNAc(2) in eukaryotes) from the lipid carrier dolichol-pyrophosphate to an asparagine residue within an Asn-X-Ser/Thr consensus motif in nascent polypeptide chains, the first step in protein N-glycosylation. N-glycosylation occurs cotranslationally and the complex associates with the Sec61 complex at the channel-forming translocon complex that mediates protein translocation across the endoplasmic reticulum (ER). All subunits are required for a maximal enzyme activity. The protein is Dolichyl-diphosphooligosaccharide--protein glycosyltransferase subunit OST4 (OST4) of Saccharomyces cerevisiae (strain ATCC 204508 / S288c) (Baker's yeast).